The sequence spans 306 residues: tRNA (guanine-N(7)-)-methyltransferase (306 aa).

Positions 1–19 (MSSTAPLDSKATEQITTAA) are enriched in polar residues. The interval 1–65 (MSSTAPLDSK…EASPELPSDE (65 aa)) is disordered. S-adenosyl-L-methionine is bound by residues G121, 144–145 (EI), 180–181 (NA), and C200. D203 is an active-site residue. 278 to 280 (TEE) lines the S-adenosyl-L-methionine pocket.

It belongs to the class I-like SAM-binding methyltransferase superfamily. TrmB family. In terms of assembly, forms a complex with TRM82.

The protein localises to the nucleus. The enzyme catalyses guanosine(46) in tRNA + S-adenosyl-L-methionine = N(7)-methylguanosine(46) in tRNA + S-adenosyl-L-homocysteine. Its pathway is tRNA modification; N(7)-methylguanine-tRNA biosynthesis. Its function is as follows. Catalyzes the formation of N(7)-methylguanine at position 46 (m7G46) in tRNA. This chain is tRNA (guanine-N(7)-)-methyltransferase, found in Lodderomyces elongisporus (strain ATCC 11503 / CBS 2605 / JCM 1781 / NBRC 1676 / NRRL YB-4239) (Yeast).